The following is a 154-amino-acid chain: Small heat shock protein IbpB (154 aa).

One can recognise a sHSP domain in the interval 26-137 (GQEPQGFPPY…QPQRIAIGSA (112 aa)).

This sequence belongs to the small heat shock protein (HSP20) family. In terms of assembly, homodimer. Forms homomultimers of about 100-150 subunits at optimal growth temperatures. Conformation changes to oligomers at high temperatures or high ionic concentrations. The decrease in size of the multimers is accompanied by an increase in chaperone activity.

It localises to the cytoplasm. Associates with aggregated proteins, together with IbpA, to stabilize and protect them from irreversible denaturation and extensive proteolysis during heat shock and oxidative stress. Aggregated proteins bound to the IbpAB complex are more efficiently refolded and reactivated by the ATP-dependent chaperone systems ClpB and DnaK/DnaJ/GrpE. Its activity is ATP-independent. This chain is Small heat shock protein IbpB, found in Yersinia pseudotuberculosis serotype O:1b (strain IP 31758).